The following is an 80-amino-acid chain: Defensin-like protein 50 (80 aa).

Residues 1–27 form the signal peptide; it reads MGFTKIVVTFFLVVMLAVSSSSQNAMA. Disulfide bonds link Cys-39–Cys-79, Cys-43–Cys-66, Cys-52–Cys-77, and Cys-56–Cys-78.

This sequence belongs to the DEFL family.

The protein resides in the secreted. The protein is Defensin-like protein 50 (LCR49) of Arabidopsis thaliana (Mouse-ear cress).